A 1398-amino-acid polypeptide reads, in one-letter code: Pyrolysin (1398 aa).

Positions 1–26 (MNKKGLTVLFIAIMLLSVVPVHFVSA) are cleaved as a signal peptide. The propeptide occupies 27–149 (GTPPVSSENS…KTKEPSLEPK (123 aa)). N-linked (GlcNAc...) asparagine glycosylation is present at N152. The Peptidase S8 domain maps to 154–656 (TWVINALQFI…HGLVNVTKSW (503 aa)). D179 functions as the Charge relay system in the catalytic mechanism. N222, N228, N240, N257, N262, N298, and N327 each carry an N-linked (GlcNAc...) asparagine glycan. Catalysis depends on H365, which acts as the Charge relay system. A glycan (N-linked (GlcNAc...) asparagine) is linked at N406. The active-site Charge relay system is S590. N-linked (GlcNAc...) asparagine glycans are attached at residues N651, N663, N739, N792, N893, N908, N917, N929, N1048, N1056, N1084, N1117, N1133, N1140, N1148, N1208, N1233, N1237, and N1332.

Belongs to the peptidase S8 family. Post-translationally, LWM pyrolysin seems to be produced by autoproteolytic activation of HMW pyrolysin. Glycosylated.

The protein resides in the cell envelope. Its function is as follows. Has endopeptidase activity toward caseins, casein fragments including alpha-S1-casein and synthetic peptides. The protein is Pyrolysin (pls) of Pyrococcus furiosus (strain ATCC 43587 / DSM 3638 / JCM 8422 / Vc1).